Consider the following 360-residue polypeptide: Peptide chain release factor 1 (360 aa).

Q235 bears the N5-methylglutamine mark. The segment at 284-313 is disordered; it reads AKRQQAEASTRRNLLGSGDRSDRNRTYNFP.

This sequence belongs to the prokaryotic/mitochondrial release factor family. Post-translationally, methylated by PrmC. Methylation increases the termination efficiency of RF1.

The protein localises to the cytoplasm. In terms of biological role, peptide chain release factor 1 directs the termination of translation in response to the peptide chain termination codons UAG and UAA. The polypeptide is Peptide chain release factor 1 (Salmonella schwarzengrund (strain CVM19633)).